The following is a 466-amino-acid chain: Asparagine--tRNA ligase (466 aa).

It belongs to the class-II aminoacyl-tRNA synthetase family. In terms of assembly, homodimer.

The protein resides in the cytoplasm. It catalyses the reaction tRNA(Asn) + L-asparagine + ATP = L-asparaginyl-tRNA(Asn) + AMP + diphosphate + H(+). This chain is Asparagine--tRNA ligase, found in Shewanella sp. (strain ANA-3).